A 353-amino-acid polypeptide reads, in one-letter code: Variable large protein 12 (353 aa).

An N-terminal signal peptide occupies residues 1–18 (MRKRISAIIMTLFMVLAS). Cys19 carries the N-palmitoyl cysteine lipid modification. The S-diacylglycerol cysteine moiety is linked to residue Cys19.

It belongs to the variable large protein (Vlp) family. Beta subfamily.

It localises to the cell outer membrane. In terms of biological role, the Vlp and Vsp proteins are antigenically distinct proteins, only one vlp or vsp gene is transcriptionally active at any one time. Switching between these genes is a mechanism of host immune response evasion. In Borrelia hermsii, this protein is Variable large protein 12.